The primary structure comprises 364 residues: Histidinol-phosphate aminotransferase (364 aa).

Position 226 is an N6-(pyridoxal phosphate)lysine (K226).

This sequence belongs to the class-II pyridoxal-phosphate-dependent aminotransferase family. Histidinol-phosphate aminotransferase subfamily. Homodimer. Pyridoxal 5'-phosphate is required as a cofactor.

It carries out the reaction L-histidinol phosphate + 2-oxoglutarate = 3-(imidazol-4-yl)-2-oxopropyl phosphate + L-glutamate. It participates in amino-acid biosynthesis; L-histidine biosynthesis; L-histidine from 5-phospho-alpha-D-ribose 1-diphosphate: step 7/9. The sequence is that of Histidinol-phosphate aminotransferase from Sulfurimonas denitrificans (strain ATCC 33889 / DSM 1251) (Thiomicrospira denitrificans (strain ATCC 33889 / DSM 1251)).